The sequence spans 79 residues: Cytochrome b (79 aa).

The next 3 helical transmembrane spans lie at 1-7 (TALLLAM), 31-52 (WLIR…YLHI), and 67-79 (WNIG…TLMA). The heme b site is built by H37 and H51.

This sequence belongs to the cytochrome b family. In terms of assembly, the cytochrome bc1 complex contains 11 subunits: 3 respiratory subunits (MT-CYB, CYC1 and UQCRFS1), 2 core proteins (UQCRC1 and UQCRC2) and 6 low-molecular weight proteins (UQCRH/QCR6, UQCRB/QCR7, UQCRQ/QCR8, UQCR10/QCR9, UQCR11/QCR10 and a cleavage product of UQCRFS1). This cytochrome bc1 complex then forms a dimer. Heme b is required as a cofactor.

Its subcellular location is the mitochondrion inner membrane. Component of the ubiquinol-cytochrome c reductase complex (complex III or cytochrome b-c1 complex) that is part of the mitochondrial respiratory chain. The b-c1 complex mediates electron transfer from ubiquinol to cytochrome c. Contributes to the generation of a proton gradient across the mitochondrial membrane that is then used for ATP synthesis. In Corcorax melanoramphos (White-winged chough), this protein is Cytochrome b (MT-CYB).